We begin with the raw amino-acid sequence, 146 residues long: Large ribosomal subunit protein uL15 (146 aa).

The disordered stretch occupies residues 1-59 (MRLEELKAPAGANKRTKRVGRGTGSGHGKTSTRGHKGQKSRSGGGVRPGFEGGQMPLQR). The span at 30-39 (TSTRGHKGQK) shows a compositional bias: basic residues. The span at 42 to 52 (SGGGVRPGFEG) shows a compositional bias: gly residues.

This sequence belongs to the universal ribosomal protein uL15 family. As to quaternary structure, part of the 50S ribosomal subunit.

In terms of biological role, binds to the 23S rRNA. The chain is Large ribosomal subunit protein uL15 from Syntrophomonas wolfei subsp. wolfei (strain DSM 2245B / Goettingen).